Consider the following 60-residue polypeptide: Large ribosomal subunit protein bL32 (60 aa).

It belongs to the bacterial ribosomal protein bL32 family.

This Ruminiclostridium cellulolyticum (strain ATCC 35319 / DSM 5812 / JCM 6584 / H10) (Clostridium cellulolyticum) protein is Large ribosomal subunit protein bL32.